A 67-amino-acid polypeptide reads, in one-letter code: uncharacterized protein (67 aa).

A helical transmembrane segment spans residues 4–24; that stretch reads WIFAILMLGVAIVLSIIATFF.

It is found in the membrane. This is an uncharacterized protein from Bacillus anthracis.